We begin with the raw amino-acid sequence, 116 residues long: Cysteine proteinase inhibitor 1 (116 aa).

A signal peptide spans 1 to 22 (MVPKPLSLLLLLLLALSAAVVG). Residues 30–89 (GGWRPIENLNSAEVQDVAQFAVSEHNKQANDELQYQSVVRGYTQVVAGTNYRLVIAAKDG) enclose the Cystatin domain. The Secondary area of contact motif lies at 73 to 77 (QVVAG). A glycan (N-linked (GlcNAc...) asparagine) is linked at N109.

It belongs to the cystatin family. Phytocystatin subfamily.

It is found in the secreted. Specific inhibitor of papain family cysteine proteinases. The polypeptide is Cysteine proteinase inhibitor 1 (Actinidia chinensis var. chinensis (Chinese soft-hair kiwi)).